The primary structure comprises 366 residues: Protein BIG GRAIN 1-like B (366 aa).

Disordered stretches follow at residues 42 to 73 (DSSTNSSSMRKTKHQNREDTRVSANRRDDFNR) and 129 to 148 (FERSPQNHRPNSSNKQEHGS). Over residues 56-73 (QNREDTRVSANRRDDFNR) the composition is skewed to basic and acidic residues.

It belongs to the BIG GRAIN 1 (BG1) plant protein family.

It is found in the cell membrane. Functionally, involved in auxin transport. Regulator of the auxin signaling pathway. The chain is Protein BIG GRAIN 1-like B from Arabidopsis thaliana (Mouse-ear cress).